A 94-amino-acid chain; its full sequence is Integration host factor subunit beta (94 aa).

Belongs to the bacterial histone-like protein family. In terms of assembly, heterodimer of an alpha and a beta chain.

Its function is as follows. This protein is one of the two subunits of integration host factor, a specific DNA-binding protein that functions in genetic recombination as well as in transcriptional and translational control. The sequence is that of Integration host factor subunit beta from Roseobacter denitrificans (strain ATCC 33942 / OCh 114) (Erythrobacter sp. (strain OCh 114)).